Here is a 232-residue protein sequence, read N- to C-terminus: Flagellar L-ring protein (232 aa).

The N-terminal stretch at 1–15 is a signal peptide; sequence MKKVLFYVLPFAFFG. Cysteine 16 carries N-palmitoyl cysteine lipidation. Cysteine 16 carries S-diacylglycerol cysteine lipidation.

This sequence belongs to the FlgH family. As to quaternary structure, the basal body constitutes a major portion of the flagellar organelle and consists of four rings (L,P,S, and M) mounted on a central rod.

It is found in the cell outer membrane. Its subcellular location is the bacterial flagellum basal body. Its function is as follows. Assembles around the rod to form the L-ring and probably protects the motor/basal body from shearing forces during rotation. The sequence is that of Flagellar L-ring protein from Campylobacter jejuni subsp. doylei (strain ATCC BAA-1458 / RM4099 / 269.97).